The sequence spans 132 residues: Small ribosomal subunit protein uS8 (132 aa).

The protein belongs to the universal ribosomal protein uS8 family. As to quaternary structure, part of the 30S ribosomal subunit. Contacts proteins S5 and S12.

In terms of biological role, one of the primary rRNA binding proteins, it binds directly to 16S rRNA central domain where it helps coordinate assembly of the platform of the 30S subunit. This Borrelia hermsii (strain HS1 / DAH) protein is Small ribosomal subunit protein uS8.